We begin with the raw amino-acid sequence, 798 residues long: Phenylalanine--tRNA ligase beta subunit (798 aa).

In terms of domain architecture, tRNA-binding spans 39–148; that stretch reads NPIFDGFLVG…EDIPIGKKIN (110 aa). One can recognise a B5 domain in the interval 402–477; that stretch reads SCSNKIKLYH…RIYNYNNIPL (76 aa). Residues aspartate 455, aspartate 461, and aspartate 465 each contribute to the Mg(2+) site. In terms of domain architecture, FDX-ACB spans 704–797; the sequence is SKYPTSRRDI…LKKKFQVVLR (94 aa).

Belongs to the phenylalanyl-tRNA synthetase beta subunit family. Type 1 subfamily. As to quaternary structure, tetramer of two alpha and two beta subunits. It depends on Mg(2+) as a cofactor.

The protein resides in the cytoplasm. It catalyses the reaction tRNA(Phe) + L-phenylalanine + ATP = L-phenylalanyl-tRNA(Phe) + AMP + diphosphate + H(+). The chain is Phenylalanine--tRNA ligase beta subunit (pheT) from Buchnera aphidicola subsp. Schizaphis graminum (strain Sg).